A 326-amino-acid polypeptide reads, in one-letter code: Sucrose operon repressor (326 aa).

The 57-residue stretch at 1–57 folds into the HTH lacI-type domain; sequence MKPKLNDVAKLAGVSATTVSRVINNHGYLSSQTKEKVFAAMRELHYQPNNMARSLQG. Residues 5–24 constitute a DNA-binding region (H-T-H motif); sequence LNDVAKLAGVSATTVSRVIN.

In terms of biological role, negative regulator of scrB expression. The polypeptide is Sucrose operon repressor (scrR) (Pediococcus pentosaceus).